The chain runs to 160 residues: Cytochrome b6-f complex subunit 4 (160 aa).

Helical transmembrane passes span 36–56 (LLYM…GLAV), 95–115 (LLGV…PFIE), and 131–151 (TVFL…TLPI).

The protein belongs to the cytochrome b family. PetD subfamily. The 4 large subunits of the cytochrome b6-f complex are cytochrome b6, subunit IV (17 kDa polypeptide, petD), cytochrome f and the Rieske protein, while the 4 small subunits are petG, petL, petM and petN. The complex functions as a dimer.

It is found in the plastid. Its subcellular location is the chloroplast thylakoid membrane. In terms of biological role, component of the cytochrome b6-f complex, which mediates electron transfer between photosystem II (PSII) and photosystem I (PSI), cyclic electron flow around PSI, and state transitions. The chain is Cytochrome b6-f complex subunit 4 from Nephroselmis olivacea (Green alga).